A 295-amino-acid chain; its full sequence is Xyloglucan endotransglucosylase/hydrolase (295 aa).

An N-terminal signal peptide occupies residues 1–23 (MAVSSTPWALVALFLMASSTVMA). Positions 25–222 (PPRKAIDVPF…WANAPFIASY (198 aa)) constitute a GH16 domain. Glu-108 (nucleophile) is an active-site residue. The Proton donor role is filled by Glu-112. Glu-112 lines the xyloglucan pocket. N-linked (GlcNAc...) asparagine glycosylation occurs at Asn-116. Xyloglucan-binding positions include 125–127 (QTN), 135–137 (NRE), 201–202 (DW), and Gly-206. Cystine bridges form between Cys-230–Cys-239 and Cys-276–Cys-289. Residue Arg-281 participates in xyloglucan binding.

This sequence belongs to the glycosyl hydrolase 16 family. XTH group 1 subfamily. Contains at least one intrachain disulfide bond essential for its enzymatic activity. In terms of processing, the N-glycan consists of an (GlcNAc)2(Hex)6 oligosaccharide; not essential for its enzymatic activity.

It is found in the secreted. It localises to the cell wall. The protein resides in the extracellular space. The protein localises to the apoplast. It catalyses the reaction breaks a beta-(1-&gt;4) bond in the backbone of a xyloglucan and transfers the xyloglucanyl segment on to O-4 of the non-reducing terminal glucose residue of an acceptor, which can be a xyloglucan or an oligosaccharide of xyloglucan.. In terms of biological role, catalyzes xyloglucan endohydrolysis (XEH) and/or endotransglycosylation (XET). Cleaves and religates xyloglucan polymers, an essential constituent of the primary cell wall, and thereby participates in cell wall construction of growing tissues. In Brassica oleracea var. botrytis (Cauliflower), this protein is Xyloglucan endotransglucosylase/hydrolase (XET16A).